Here is a 253-residue protein sequence, read N- to C-terminus: Phosphoadenosine 5'-phosphosulfate reductase (253 aa).

C239 (nucleophile; cysteine thiosulfonate intermediate) is an active-site residue.

Belongs to the PAPS reductase family. CysH subfamily.

The protein localises to the cytoplasm. The enzyme catalyses [thioredoxin]-disulfide + sulfite + adenosine 3',5'-bisphosphate + 2 H(+) = [thioredoxin]-dithiol + 3'-phosphoadenylyl sulfate. It participates in sulfur metabolism; hydrogen sulfide biosynthesis; sulfite from sulfate: step 3/3. In terms of biological role, catalyzes the formation of sulfite from phosphoadenosine 5'-phosphosulfate (PAPS) using thioredoxin as an electron donor. The protein is Phosphoadenosine 5'-phosphosulfate reductase of Aliivibrio fischeri (strain ATCC 700601 / ES114) (Vibrio fischeri).